A 254-amino-acid chain; its full sequence is MKIGVYGASGRIGKLLLEELKGGYKGLALSSVFVRQKCETDFSHFSHSPLVTNDLKAFVRACECVIDFSLPKGLDHLLEALLECPKILVSGTTGLEKETLEKMQQLALRVPLLHAHNMSLGIMMFNQLAFLASLKLKDADIEIVETHHNLKKDAPSGTALSLYETCAKARGYDEKNALTTHREGLRSKESIGIAALRGGDVAGKHTIGFYLEGEYIELSHTATNRSIFAKGALEVALWLKDKAAKKYEINEMFG.

7 to 12 (GASGRI) contacts NAD(+). Arg35 contributes to the NADP(+) binding site. Residues 91–93 (GTT) and 115–118 (AHNM) each bind NAD(+). Catalysis depends on His147, which acts as the Proton donor/acceptor. Residue His148 coordinates (S)-2,3,4,5-tetrahydrodipicolinate. Lys151 serves as the catalytic Proton donor. (S)-2,3,4,5-tetrahydrodipicolinate is bound at residue 157-158 (GT).

The protein belongs to the DapB family.

Its subcellular location is the cytoplasm. It catalyses the reaction (S)-2,3,4,5-tetrahydrodipicolinate + NAD(+) + H2O = (2S,4S)-4-hydroxy-2,3,4,5-tetrahydrodipicolinate + NADH + H(+). It carries out the reaction (S)-2,3,4,5-tetrahydrodipicolinate + NADP(+) + H2O = (2S,4S)-4-hydroxy-2,3,4,5-tetrahydrodipicolinate + NADPH + H(+). It functions in the pathway amino-acid biosynthesis; L-lysine biosynthesis via DAP pathway; (S)-tetrahydrodipicolinate from L-aspartate: step 4/4. Functionally, catalyzes the conversion of 4-hydroxy-tetrahydrodipicolinate (HTPA) to tetrahydrodipicolinate. The chain is 4-hydroxy-tetrahydrodipicolinate reductase from Helicobacter pylori (strain HPAG1).